The chain runs to 224 residues: uncharacterized protein (224 aa).

The span at 44–139 (TSPPIVPLPT…PSPPPSPSPL (96 aa)) shows a compositional bias: pro residues. Positions 44–145 (TSPPIVPLPT…PSPLGEPMYY (102 aa)) are disordered.

This is an uncharacterized protein from Lepidoptera (butterflies and moths).